We begin with the raw amino-acid sequence, 438 residues long: Trigger factor (438 aa).

Residues 163 to 249 enclose the PPIase FKBP-type domain; that stretch reads EDFVLIDYEG…LKEIRKQILP (87 aa).

Belongs to the FKBP-type PPIase family. Tig subfamily.

It is found in the cytoplasm. It carries out the reaction [protein]-peptidylproline (omega=180) = [protein]-peptidylproline (omega=0). Involved in protein export. Acts as a chaperone by maintaining the newly synthesized protein in an open conformation. Functions as a peptidyl-prolyl cis-trans isomerase. This Desulfatibacillum aliphaticivorans protein is Trigger factor.